The sequence spans 256 residues: Probable transcriptional regulatory protein A1I_03240 (256 aa).

The tract at residues 1 to 21 is disordered; sequence MAGHSKFKNIQHRKGAQDKKR.

The protein belongs to the TACO1 family.

It localises to the cytoplasm. This is Probable transcriptional regulatory protein A1I_03240 from Rickettsia bellii (strain OSU 85-389).